Here is a 280-residue protein sequence, read N- to C-terminus: MTAALPDLSFHPAWHAQLELAYARAGDATRPVTRRHAGPLRVQKHLYAEGPEVCQHILVHPPGGIAGGDSLAFDVRLGERAWAQLTSPGAAKWYRAACPARQTLEIHLEPGATLEWLPQESIVFAGAQAELETRIQLRGDARLFYWDMVALGRPASGERFASGHFVAALDIRRDDRLLWHERQRIDGGDRLLDSPIGLAGHPVLATLVASGEIDTDLLQRCRALPCAGRGNLSQLPGGLLVARCLADEALHARAWLIELWRLLRPALLGREAVPPRIWST.

The protein belongs to the UreD family. UreD, UreF and UreG form a complex that acts as a GTP-hydrolysis-dependent molecular chaperone, activating the urease apoprotein by helping to assemble the nickel containing metallocenter of UreC. The UreE protein probably delivers the nickel.

The protein localises to the cytoplasm. In terms of biological role, required for maturation of urease via the functional incorporation of the urease nickel metallocenter. The protein is Urease accessory protein UreD of Pseudomonas aeruginosa (strain ATCC 15692 / DSM 22644 / CIP 104116 / JCM 14847 / LMG 12228 / 1C / PRS 101 / PAO1).